Consider the following 252-residue polypeptide: 14-3-3 protein 7 (252 aa).

It belongs to the 14-3-3 family. As to quaternary structure, homodimer.

In Solanum lycopersicum (Tomato), this protein is 14-3-3 protein 7 (TFT7).